Here is a 114-residue protein sequence, read N- to C-terminus: Non-specific lipid-transfer protein 1 (114 aa).

The signal sequence occupies residues M1–A25. 4 disulfides stabilise this stretch: C29-C76, C39-C53, C54-C99, and C74-C113.

It belongs to the plant LTP family. Expressed in seeds and, at very low levels, in pulp of fruit (at protein level).

Functionally, plant non-specific lipid-transfer proteins transfer phospholipids as well as galactolipids across membranes. May play a role in wax or cutin deposition in the cell walls of expanding epidermal cells and certain secretory tissues. The chain is Non-specific lipid-transfer protein 1 from Actinidia chinensis var. chinensis (Chinese soft-hair kiwi).